The following is a 216-amino-acid chain: Pyrrolidone-carboxylate peptidase (216 aa).

Active-site residues include E80, C143, and H168.

The protein belongs to the peptidase C15 family. In terms of assembly, homotetramer.

Its subcellular location is the cytoplasm. It catalyses the reaction Release of an N-terminal pyroglutamyl group from a polypeptide, the second amino acid generally not being Pro.. Removes 5-oxoproline from various penultimate amino acid residues except L-proline. This is Pyrrolidone-carboxylate peptidase from Cupriavidus pinatubonensis (strain JMP 134 / LMG 1197) (Cupriavidus necator (strain JMP 134)).